The following is a 385-amino-acid chain: DNA replication and repair protein RecF (385 aa).

30–37 serves as a coordination point for ATP; the sequence is GRNGQGKT.

Belongs to the RecF family.

The protein localises to the cytoplasm. The RecF protein is involved in DNA metabolism; it is required for DNA replication and normal SOS inducibility. RecF binds preferentially to single-stranded, linear DNA. It also seems to bind ATP. The chain is DNA replication and repair protein RecF from Leifsonia xyli subsp. xyli (strain CTCB07).